The sequence spans 328 residues: BURP domain-containing protein 11 (328 aa).

The 245-residue stretch at Phe74 to Arg318 folds into the BURP domain.

Expressed in roots.

The polypeptide is BURP domain-containing protein 11 (BURP11) (Oryza sativa subsp. japonica (Rice)).